Consider the following 85-residue polypeptide: ATP synthase subunit c (85 aa).

A run of 2 helical transmembrane segments spans residues 20 to 40 (LGAG…GNIF) and 65 to 85 (FALT…ILFA).

Belongs to the ATPase C chain family. F-type ATPases have 2 components, F(1) - the catalytic core - and F(0) - the membrane proton channel. F(1) has five subunits: alpha(3), beta(3), gamma(1), delta(1), epsilon(1). F(0) has three main subunits: a(1), b(2) and c(10-14). The alpha and beta chains form an alternating ring which encloses part of the gamma chain. F(1) is attached to F(0) by a central stalk formed by the gamma and epsilon chains, while a peripheral stalk is formed by the delta and b chains.

The protein localises to the cell inner membrane. Functionally, f(1)F(0) ATP synthase produces ATP from ADP in the presence of a proton or sodium gradient. F-type ATPases consist of two structural domains, F(1) containing the extramembraneous catalytic core and F(0) containing the membrane proton channel, linked together by a central stalk and a peripheral stalk. During catalysis, ATP synthesis in the catalytic domain of F(1) is coupled via a rotary mechanism of the central stalk subunits to proton translocation. In terms of biological role, key component of the F(0) channel; it plays a direct role in translocation across the membrane. A homomeric c-ring of between 10-14 subunits forms the central stalk rotor element with the F(1) delta and epsilon subunits. In Gluconobacter oxydans (strain 621H) (Gluconobacter suboxydans), this protein is ATP synthase subunit c.